A 353-amino-acid polypeptide reads, in one-letter code: Small ribosomal subunit biogenesis GTPase RsgA (353 aa).

Residues methionine 1–threonine 24 are disordered. Basic residues predominate over residues glutamine 10–lysine 23. Positions alanine 104–phenylalanine 274 constitute a CP-type G domain. GTP contacts are provided by residues asparagine 160–aspartate 163 and glycine 214–serine 222. Cysteine 298, cysteine 303, histidine 305, and cysteine 311 together coordinate Zn(2+).

This sequence belongs to the TRAFAC class YlqF/YawG GTPase family. RsgA subfamily. As to quaternary structure, monomer. Associates with 30S ribosomal subunit, binds 16S rRNA. Zn(2+) is required as a cofactor.

Its subcellular location is the cytoplasm. One of several proteins that assist in the late maturation steps of the functional core of the 30S ribosomal subunit. Helps release RbfA from mature subunits. May play a role in the assembly of ribosomal proteins into the subunit. Circularly permuted GTPase that catalyzes slow GTP hydrolysis, GTPase activity is stimulated by the 30S ribosomal subunit. In Klebsiella pneumoniae subsp. pneumoniae (strain ATCC 700721 / MGH 78578), this protein is Small ribosomal subunit biogenesis GTPase RsgA.